Consider the following 118-residue polypeptide: Altered inheritance of mitochondria protein 26, mitochondrial (118 aa).

Transmembrane regions (helical) follow at residues 7-27, 41-61, and 98-118; these read EHLL…AYFF, LAVT…SIPA, and FLFC…GLSI.

The protein resides in the mitochondrion membrane. Functionally, involved in selective mitochondria autophagy (mitophagy). This is Altered inheritance of mitochondria protein 26, mitochondrial (AIM26) from Saccharomyces cerevisiae (strain ATCC 204508 / S288c) (Baker's yeast).